The primary structure comprises 188 residues: M-phase phosphoprotein 6 homolog (188 aa).

Positions 93–188 (EENVDEKDVS…NKNKKKKKRN (96 aa)) are disordered. Residues 120–149 (LTERERRKQELVSKKAEASRKMEVKAPAKE) show a composition bias toward basic and acidic residues. The residue at position 167 (Ser-167) is a Phosphoserine. Positions 174-188 (RKTKKNKNKKKKKRN) are enriched in basic residues.

This sequence belongs to the MPP6 family. Associates with the RNA exosome complex.

It is found in the nucleus. Functionally, RNA-binding protein that associates with the RNA exosome complex. The protein is M-phase phosphoprotein 6 homolog of Schizosaccharomyces pombe (strain 972 / ATCC 24843) (Fission yeast).